The sequence spans 425 residues: Kynureninase (425 aa).

Residues Leu-105, Thr-106, 133-136, Asp-218, His-221, and Tyr-243 each bind pyridoxal 5'-phosphate; that span reads FPSD. At Lys-244 the chain carries N6-(pyridoxal phosphate)lysine. Pyridoxal 5'-phosphate-binding residues include Trp-274 and Asn-302.

It belongs to the kynureninase family. Homodimer. It depends on pyridoxal 5'-phosphate as a cofactor.

It carries out the reaction L-kynurenine + H2O = anthranilate + L-alanine + H(+). It catalyses the reaction 3-hydroxy-L-kynurenine + H2O = 3-hydroxyanthranilate + L-alanine + H(+). The protein operates within amino-acid degradation; L-kynurenine degradation; L-alanine and anthranilate from L-kynurenine: step 1/1. Its pathway is cofactor biosynthesis; NAD(+) biosynthesis; quinolinate from L-kynurenine: step 2/3. Functionally, catalyzes the cleavage of L-kynurenine (L-Kyn) and L-3-hydroxykynurenine (L-3OHKyn) into anthranilic acid (AA) and 3-hydroxyanthranilic acid (3-OHAA), respectively. This is Kynureninase from Christiangramia forsetii (strain DSM 17595 / CGMCC 1.15422 / KT0803) (Gramella forsetii).